The chain runs to 557 residues: Formate--tetrahydrofolate ligase 2 (557 aa).

66–73 (TPAGEGKT) provides a ligand contact to ATP.

This sequence belongs to the formate--tetrahydrofolate ligase family.

The catalysed reaction is (6S)-5,6,7,8-tetrahydrofolate + formate + ATP = (6R)-10-formyltetrahydrofolate + ADP + phosphate. It participates in one-carbon metabolism; tetrahydrofolate interconversion. The chain is Formate--tetrahydrofolate ligase 2 from Streptococcus pyogenes serotype M4 (strain MGAS10750).